Here is a 600-residue protein sequence, read N- to C-terminus: Arginine--tRNA ligase (600 aa).

The short motif at 132 to 142 is the 'HIGH' region element; it reads ANPTGPLHVGH.

This sequence belongs to the class-I aminoacyl-tRNA synthetase family. In terms of assembly, monomer.

It is found in the cytoplasm. The catalysed reaction is tRNA(Arg) + L-arginine + ATP = L-arginyl-tRNA(Arg) + AMP + diphosphate. The protein is Arginine--tRNA ligase of Ralstonia nicotianae (strain ATCC BAA-1114 / GMI1000) (Ralstonia solanacearum).